The sequence spans 572 residues: FAD-linked oxidoreductase patO (572 aa).

An N-terminal signal peptide occupies residues 1–23 (MRLSIYSSILLLRAMCLVRPTFG). N-linked (GlcNAc...) asparagine glycans are attached at residues Asn48, Asn71, Asn126, Asn180, Asn309, Asn354, Asn381, Asn422, Asn446, and Asn481. Residues 115–295 (CAPGDMVVYS…YSMTVKAFPD (181 aa)) form the FAD-binding PCMH-type domain.

Belongs to the oxygen-dependent FAD-linked oxidoreductase family. It depends on FAD as a cofactor.

It is found in the vacuole lumen. The protein operates within mycotoxin biosynthesis; patulin biosynthesis. FAD-linked oxidoreductase; part of the gene cluster that mediates the biosynthesis of patulin, an acetate-derived tetraketide mycotoxin produced by several fungal species that shows antimicrobial properties against several bacteria. PatO acts with patJ in the vacuole to convert gentisyl alcohol to isoepoxydon. The pathway begins with the synthesis of 6-methylsalicylic acid by the polyketide synthase (PKS) patK via condensation of acetate and malonate units. The 6-methylsalicylic acid decarboxylase patG then catalyzes the decarboxylation of 6-methylsalicylic acid to yield m-cresol (also known as 3-methylphenol). These first reactions occur in the cytosol. The intermediate m-cresol is then transported into the endoplasmic reticulum where the cytochrome P450 monooxygenase patH converts it to m-hydroxybenzyl alcohol, which is further converted to gentisyl alcohol by the cytochrome P450 monooxygenase patI. The oxidoreductases patJ and patO further convert gentisyl alcohol to isoepoxydon in the vacuole. PatN catalyzes then the transformation of isoepoxydon into phyllostine. The cluster protein patF is responsible for the conversion from phyllostine to neopatulin whereas the alcohol dehydrogenase patD converts neopatulin to E-ascladiol. The steps between isoepoxydon and E-ascladiol occur in the cytosol, and E-ascladiol is probably secreted to the extracellular space by one of the cluster-specific transporters patC or patM. Finally, the secreted patulin synthase patE catalyzes the conversion of E-ascladiol to patulin. This chain is FAD-linked oxidoreductase patO, found in Aspergillus clavatus (strain ATCC 1007 / CBS 513.65 / DSM 816 / NCTC 3887 / NRRL 1 / QM 1276 / 107).